The following is a 681-amino-acid chain: Envelope glycoprotein (681 aa).

The N-terminal stretch at 1–18 (MKTTCFLISLILIQGTKN) is a signal peptide. Residues 19-648 (LPILEIASNN…GLGGKWWTSD (630 aa)) are Extracellular-facing. 5 cysteine pairs are disulfide-bonded: Cys-37–Cys-610, Cys-92–Cys-119, Cys-211–Cys-226, Cys-512–Cys-557, and Cys-602–Cys-609. Residues 38 to 188 (SGTLQKTEDV…FSRQGQGYRH (151 aa)) form a receptor-binding region. N-linked (GlcNAc...) asparagine; by host glycans are attached at residues Asn-94, Asn-171, Asn-190, Asn-202, Asn-207, Asn-219, Asn-223, and Asn-255. The interval 223-427 (NQTCAPSKIP…PPTPSSTAQH (205 aa)) is disordered. Composition is skewed to polar residues over residues 244–259 (LTST…TTDP), 281–290 (TSDAVTKQGL), and 308–318 (GGNNTNHSQDA). The interval 277–455 (EPHTTSDAVT…PFLDGLINAP (179 aa)) is mucin-like region. Residues Asn-310, Asn-313, Asn-325, Asn-326, Asn-337, Asn-344, Asn-345, Asn-350, Asn-360, Asn-408, and Asn-487 are each glycosylated (N-linked (GlcNAc...) asparagine; by host). Low complexity predominate over residues 337–347 (NTTTISTNNTS). Over residues 348 to 414 (KHNFSTLSAP…TAPNTTNEHF (67 aa)) the composition is skewed to polar residues. The tract at residues 529-549 (GLSWIPFFGPGIEGLYTAVLI) is fusion peptide. Asn-564 carries N-linked (GlcNAc...) asparagine; by host glycosylation. A glycan (N-linked (GlcNAc...) asparagine; by host) is linked at Asn-619. The helical transmembrane segment at 649–669 (WGVLTNLGILLLLSIAVLIAL) threads the bilayer. The Cytoplasmic segment spans residues 670–681 (SCICRIFTKYIG). S-palmitoyl cysteine; by host attachment occurs at residues Cys-671 and Cys-673.

This sequence belongs to the filoviruses glycoprotein family. As to quaternary structure, homotrimer; each monomer consists of a GP1 and a GP2 subunit linked by disulfide bonds. The resulting peplomers (GP1,2) protrude from the virus surface as spikes. GP1,2 interacts with human CD209 and CLEC4M (collectively referred to as DC-SIGN(R)). Asialoglycoprotein receptor (ASGP-R) may be a liver-specific receptor for GP1,2. Members of the Tyro3 receptor tyrosine kinase family may be cell entry factors interacting with GP1,2. Post-translationally, N-glycosylated. In terms of processing, O-glycosylated in the mucin-like region. Specific enzymatic cleavages in vivo yield mature proteins. The precursor is processed into GP1 and GP2 by host cell furin in the trans Golgi, and maybe by other host proteases, to yield the mature GP1 and GP2 proteins. The cleavage site corresponds to the furin optimal cleavage sequence [KR]-X-[KR]-R. Post-translationally, GP1 is phosphorylated on serine residues between residues 260 and 273.

The protein resides in the virion membrane. Its subcellular location is the host cell membrane. Its function is as follows. GP1 is responsible for binding to the receptor(s) on target cells. Interacts with CD209/DC-SIGN and CLEC4M/DC-SIGNR which act as cofactors for virus entry into the host cell. Binding to CD209 and CLEC4M, which are respectively found on dendritic cells (DCs), and on endothelial cells of liver sinusoids and lymph node sinuses, facilitate infection of macrophages and endothelial cells. These interactions not only facilitate virus cell entry, but also allow capture of viral particles by DCs and subsequent transmission to susceptible cells without DCs infection (trans infection). Functionally, GP2 acts as a class I viral fusion protein. Under the current model, the protein has at least 3 conformational states: pre-fusion native state, pre-hairpin intermediate state, and post-fusion hairpin state. During viral and target cell membrane fusion, the coiled coil regions (heptad repeats) assume a trimer-of-hairpins structure, positioning the fusion peptide in close proximity to the C-terminal region of the ectodomain. The formation of this structure appears to drive apposition and subsequent fusion of viral and target cell membranes. Responsible for penetration of the virus into the cell cytoplasm by mediating the fusion of the membrane of the endocytosed virus particle with the endosomal membrane. Low pH in endosomes induces an irreversible conformational change in GP2, releasing the fusion hydrophobic peptide. In Lake Victoria marburgvirus (strain Musoke-80) (MARV), this protein is Envelope glycoprotein (GP).